A 159-amino-acid chain; its full sequence is Ribosomal RNA large subunit methyltransferase H (159 aa).

S-adenosyl-L-methionine contacts are provided by residues Gly-108 and 127–132 (FGKLTM).

The protein belongs to the RNA methyltransferase RlmH family. As to quaternary structure, homodimer.

It localises to the cytoplasm. The catalysed reaction is pseudouridine(1915) in 23S rRNA + S-adenosyl-L-methionine = N(3)-methylpseudouridine(1915) in 23S rRNA + S-adenosyl-L-homocysteine + H(+). Functionally, specifically methylates the pseudouridine at position 1915 (m3Psi1915) in 23S rRNA. In Lactobacillus helveticus (strain DPC 4571), this protein is Ribosomal RNA large subunit methyltransferase H.